Consider the following 225-residue polypeptide: Phosphoglycolate phosphatase (225 aa).

Asp11 functions as the Nucleophile in the catalytic mechanism. Mg(2+) is bound by residues Asp11 and Asp13. Substrate is bound at residue Lys153. Mg(2+)-binding residues include Asp176 and Asp180.

This sequence belongs to the archaeal SPP-like hydrolase family. Mg(2+) serves as cofactor.

The enzyme catalyses 2-phosphoglycolate + H2O = glycolate + phosphate. In terms of biological role, catalyzes the dephosphorylation of 2-phosphoglycolate. This chain is Phosphoglycolate phosphatase, found in Halobacterium salinarum (strain ATCC 29341 / DSM 671 / R1).